The sequence spans 443 residues: Thymidine phosphorylase (443 aa).

Belongs to the thymidine/pyrimidine-nucleoside phosphorylase family. In terms of assembly, homodimer.

The enzyme catalyses thymidine + phosphate = 2-deoxy-alpha-D-ribose 1-phosphate + thymine. It participates in pyrimidine metabolism; dTMP biosynthesis via salvage pathway; dTMP from thymine: step 1/2. In terms of biological role, the enzymes which catalyze the reversible phosphorolysis of pyrimidine nucleosides are involved in the degradation of these compounds and in their utilization as carbon and energy sources, or in the rescue of pyrimidine bases for nucleotide synthesis. This chain is Thymidine phosphorylase, found in Sodalis glossinidius (strain morsitans).